Consider the following 641-residue polypeptide: Mannosyl-oligosaccharide 1,2-alpha-mannosidase IB (641 aa).

T2 carries the post-translational modification N-acetylthreonine. Residues 2–36 lie on the Cytoplasmic side of the membrane; the sequence is TTPALLPLSGRRIPPLNLGPPSFPHHRATLRLSEK. The helical; Signal-anchor for type II membrane protein transmembrane segment at 37–57 threads the bilayer; that stretch reads FILLLILSAFITLCFGAFFFL. At 58–641 the chain is on the lumenal side; it reads PDSSKHKRFD…STLSGNPAVR (584 aa). Residues C462 and C494 are joined by a disulfide bond. E508 (proton donor) is an active-site residue. T619 provides a ligand contact to Ca(2+). N631 carries an N-linked (GlcNAc...) asparagine glycan.

Belongs to the glycosyl hydrolase 47 family. It depends on Ca(2+) as a cofactor.

It is found in the golgi apparatus membrane. The catalysed reaction is N(4)-(alpha-D-Man-(1-&gt;2)-alpha-D-Man-(1-&gt;2)-alpha-D-Man-(1-&gt;3)-[alpha-D-Man-(1-&gt;2)-alpha-D-Man-(1-&gt;3)-[alpha-D-Man-(1-&gt;2)-alpha-D-Man-(1-&gt;6)]-alpha-D-Man-(1-&gt;6)]-beta-D-Man-(1-&gt;4)-beta-D-GlcNAc-(1-&gt;4)-beta-D-GlcNAc)-L-asparaginyl-[protein] (N-glucan mannose isomer 9A1,2,3B1,2,3) + 4 H2O = N(4)-(alpha-D-Man-(1-&gt;3)-[alpha-D-Man-(1-&gt;3)-[alpha-D-Man-(1-&gt;6)]-alpha-D-Man-(1-&gt;6)]-beta-D-Man-(1-&gt;4)-beta-D-GlcNAc-(1-&gt;4)-beta-D-GlcNAc)-L-asparaginyl-[protein] (N-glucan mannose isomer 5A1,2) + 4 beta-D-mannose. It catalyses the reaction N(4)-(alpha-D-Man-(1-&gt;2)-alpha-D-Man-(1-&gt;2)-alpha-D-Man-(1-&gt;3)-[alpha-D-Man-(1-&gt;3)-[alpha-D-Man-(1-&gt;2)-alpha-D-Man-(1-&gt;6)]-alpha-D-Man-(1-&gt;6)]-beta-D-Man-(1-&gt;4)-beta-D-GlcNAc-(1-&gt;4)-beta-D-GlcNAc)-L-asparaginyl-[protein] (N-glucan mannose isomer 8A1,2,3B1,3) + 3 H2O = N(4)-(alpha-D-Man-(1-&gt;3)-[alpha-D-Man-(1-&gt;3)-[alpha-D-Man-(1-&gt;6)]-alpha-D-Man-(1-&gt;6)]-beta-D-Man-(1-&gt;4)-beta-D-GlcNAc-(1-&gt;4)-beta-D-GlcNAc)-L-asparaginyl-[protein] (N-glucan mannose isomer 5A1,2) + 3 beta-D-mannose. It participates in protein modification; protein glycosylation. Inhibited by both 1-deoxymannojirimycin and kifunensine. Involved in the maturation of Asn-linked oligosaccharides. Progressively trim alpha-1,2-linked mannose residues from Man(9)GlcNAc(2) to produce Man(5)GlcNAc(2). In Mus musculus (Mouse), this protein is Mannosyl-oligosaccharide 1,2-alpha-mannosidase IB (Man1a2).